The chain runs to 215 residues: T-complex protein 10A homolog 1 (215 aa).

Residues 1–25 (MLAGQLEARDPKEGTHPEDPCPGAG) form a disordered region. Residues 7–19 (EARDPKEGTHPED) show a composition bias toward basic and acidic residues. A coiled-coil region spans residues 69-110 (ADVHGKLRSHIDALREQNMELREKLRALQLQRWKARKKSAAS). The segment at 75-96 (LRSHIDALREQNMELREKLRAL) is leucine-zipper. The segment covering 150–163 (ATLLGQRSSSNNSA) has biased composition (polar residues). Residues 150–215 (ATLLGQRSSS…TPCAERRGGV (66 aa)) form a disordered region.

This sequence belongs to the TCP10 family. As to quaternary structure, self-associates (via leucine zipper). Interacts (via leucine zipper) with ZIPK/DAPK3 (via leucine zipper). Interacts with MAD4. Expressed in liver and testis. Expressed in the seminiferous tubules (at protein level).

It localises to the nucleus. In terms of biological role, may be involved in transcriptional regulation. Has in vitro transcription inhibition activity. Acts as a tumor suppressor in hepatocellular carcinoma (HCC) cells. In Homo sapiens (Human), this protein is T-complex protein 10A homolog 1 (TCP10L).